The sequence spans 530 residues: UDP-glucuronosyltransferase 2A3 (530 aa).

The signal sequence occupies residues 1–23 (MAPGKLASAVLLLLLCCAGSGFC). The Extracellular segment spans residues 24–494 (GKVLVWPCEM…SWFQYHSLDV (471 aa)). N-linked (GlcNAc...) asparagine glycosylation is present at asparagine 316. Residues 495-515 (IGFLLACVASAILLVTKCCLF) traverse the membrane as a helical segment. Over 516-530 (SFQNFIKIGKRIKKE) the chain is Cytoplasmic.

This sequence belongs to the UDP-glycosyltransferase family. As to expression, specifically expressed in liver and small intestine.

The protein resides in the membrane. It carries out the reaction glucuronate acceptor + UDP-alpha-D-glucuronate = acceptor beta-D-glucuronoside + UDP + H(+). In terms of biological role, UDP-glucuronosyltransferases catalyze phase II biotransformation reactions in which lipophilic substrates are conjugated with glucuronic acid to increase water solubility and enhance excretion. They are of major importance in the conjugation and subsequent elimination of potentially toxic xenobiotics and endogenous compounds. This Cavia porcellus (Guinea pig) protein is UDP-glucuronosyltransferase 2A3 (UGT2A3).